Here is an 89-residue protein sequence, read N- to C-terminus: Small ribosomal subunit protein uS15 (89 aa).

The protein belongs to the universal ribosomal protein uS15 family. Part of the 30S ribosomal subunit. Forms a bridge to the 50S subunit in the 70S ribosome, contacting the 23S rRNA.

One of the primary rRNA binding proteins, it binds directly to 16S rRNA where it helps nucleate assembly of the platform of the 30S subunit by binding and bridging several RNA helices of the 16S rRNA. Functionally, forms an intersubunit bridge (bridge B4) with the 23S rRNA of the 50S subunit in the ribosome. This Protochlamydia amoebophila (strain UWE25) protein is Small ribosomal subunit protein uS15.